Here is a 1282-residue protein sequence, read N- to C-terminus: Ribosome biogenesis protein BMS1 homolog (1282 aa).

The segment covering 1–24 (MEAKDQKKHRKKNSGPKAAKKKKR) has biased composition (basic residues). The tract at residues 1-43 (MEAKDQKKHRKKNSGPKAAKKKKRLLQDLQLGDEEDARKRNPK) is disordered. Lys-43 is covalently cross-linked (Glycyl lysine isopeptide (Lys-Gly) (interchain with G-Cter in SUMO2)). The region spanning 80–245 (PPPIVVVVMG…GRFITVMKFR (166 aa)) is the Bms1-type G domain. The segment at 89–96 (GPPKVGKS) is G1. 89-96 (GPPKVGKS) is an ATP binding site. The G2 stretch occupies residues 117–121 (PVTIV). The segment at 132 to 135 (ECGC) is G3. Residues 184 to 187 (THLD) form a G4 region. Residue Ser-188 is modified to Phosphoserine. A G5 region spans residues 219–228 (LSGMVHGEYQ). Disordered regions lie at residues 397–557 (DSKP…ANCQ) and 575–667 (PTFD…ALKW). Glycyl lysine isopeptide (Lys-Gly) (interchain with G-Cter in SUMO2) cross-links involve residues Lys-399 and Lys-415. Composition is skewed to acidic residues over residues 434-472 (GDED…ENAE) and 503-531 (DSDD…EDCT). The span at 535-550 (KGISGSKAAGEGSKAG) shows a compositional bias: low complexity. Ser-552 bears the Phosphoserine mark. The span at 588 to 610 (FASEDESEESSSLSAEEEDSENE) shows a compositional bias: acidic residues. Phosphoserine occurs at positions 625 and 639. Lys-646 participates in a covalent cross-link: Glycyl lysine isopeptide (Lys-Gly) (interchain with G-Cter in SUMO2). The span at 653-667 (EENNDSKETSGALKW) shows a compositional bias: basic and acidic residues. Position 708 is a phosphothreonine (Thr-708). 2 disordered regions span residues 787–822 (ETGD…ESAK) and 1178–1202 (NKPK…IREP). A Glycyl lysine isopeptide (Lys-Gly) (interchain with G-Cter in SUMO1); alternate cross-link involves residue Lys-810. Lys-810 participates in a covalent cross-link: Glycyl lysine isopeptide (Lys-Gly) (interchain with G-Cter in SUMO2); alternate. Residue Lys-1206 forms a Glycyl lysine isopeptide (Lys-Gly) (interchain with G-Cter in SUMO2) linkage. Residues 1219–1282 (SQKMKKAKEQ…SLKGAEGQLQ (64 aa)) form a disordered region. A compositionally biased stretch (basic and acidic residues) spans 1228-1248 (QRHLHNKEHFRAKQKEEEEKL). Over residues 1249–1259 (KRQKDLRKKLF) the composition is skewed to basic residues.

It belongs to the TRAFAC class translation factor GTPase superfamily. Bms1-like GTPase family. BMS1 subfamily. In terms of assembly, part of the small subunit (SSU) processome, composed of more than 70 proteins and the RNA chaperone small nucleolar RNA (snoRNA) U3. Interacts with RCL1.

It is found in the nucleus. Its subcellular location is the nucleolus. It carries out the reaction GTP + H2O = GDP + phosphate + H(+). Functionally, GTPase required for the synthesis of 40S ribosomal subunits and for processing of pre-ribosomal RNA (pre-rRNA) at sites A0, A1, and A2. Controls access of pre-rRNA intermediates to RCL1 during ribosome biogenesis by binding RCL1 in a GTP-dependent manner, and delivering it to pre-ribosomes. GTP-binding and/or GTP hydrolysis may induce conformational rearrangements within the BMS1-RCL1 complex allowing the interaction of RCL1 with its RNA substrate. Required for RCL1 import into the nucleus. This Homo sapiens (Human) protein is Ribosome biogenesis protein BMS1 homolog.